Consider the following 550-residue polypeptide: Acidic amino acid decarboxylase GADL1 (550 aa).

N6-(pyridoxal phosphate)lysine is present on K362.

The protein belongs to the group II decarboxylase family. In terms of assembly, homodimer. Pyridoxal 5'-phosphate is required as a cofactor. In terms of tissue distribution, expressed in skeletal muscles and kidney (at protein level). Expressed in skeletal muscle and weakly in brain. Not expressed in liver or kidney. Expressed in brain, olfactory bulb, liver, muscle and kidney with the highest expression in olfactory bulb and almost not detected in liver (at protein level).

It carries out the reaction L-aspartate + H(+) = beta-alanine + CO2. It catalyses the reaction 3-sulfino-L-alanine + H(+) = hypotaurine + CO2. The enzyme catalyses L-cysteate + H(+) = taurine + CO2. Activated weakly by 0.2-0.4 mM Li(+). Inhibited by bis-carboxymethyl-trithiocarbonate, ethylxanthogenacetic acid and 2,5-disulfoaniline. In terms of biological role, catalyzes the decarboxylation of L-aspartate, 3-sulfino-L-alanine (cysteine sulfinic acid), and L-cysteate to beta-alanine, hypotaurine and taurine, respectively. The preferred substrate is L-aspartate. Does not exhibit any decarboxylation activity toward glutamate. This chain is Acidic amino acid decarboxylase GADL1, found in Mus musculus (Mouse).